We begin with the raw amino-acid sequence, 101 residues long: Urease subunit beta (101 aa).

Belongs to the urease beta subunit family. As to quaternary structure, heterotrimer of UreA (gamma), UreB (beta) and UreC (alpha) subunits. Three heterotrimers associate to form the active enzyme.

It localises to the cytoplasm. It carries out the reaction urea + 2 H2O + H(+) = hydrogencarbonate + 2 NH4(+). Its pathway is nitrogen metabolism; urea degradation; CO(2) and NH(3) from urea (urease route): step 1/1. This Burkholderia thailandensis (strain ATCC 700388 / DSM 13276 / CCUG 48851 / CIP 106301 / E264) protein is Urease subunit beta.